Reading from the N-terminus, the 364-residue chain is tRNA N6-adenosine threonylcarbamoyltransferase (364 aa).

Fe cation-binding residues include His-118 and His-122. Residues 140–144 (LVSGG), Asp-173, Gly-186, and Asn-288 contribute to the substrate site. Asp-316 is a Fe cation binding site.

This sequence belongs to the KAE1 / TsaD family. The cofactor is Fe(2+).

The protein resides in the cytoplasm. It carries out the reaction L-threonylcarbamoyladenylate + adenosine(37) in tRNA = N(6)-L-threonylcarbamoyladenosine(37) in tRNA + AMP + H(+). Its function is as follows. Required for the formation of a threonylcarbamoyl group on adenosine at position 37 (t(6)A37) in tRNAs that read codons beginning with adenine. Is involved in the transfer of the threonylcarbamoyl moiety of threonylcarbamoyl-AMP (TC-AMP) to the N6 group of A37, together with TsaE and TsaB. TsaD likely plays a direct catalytic role in this reaction. The sequence is that of tRNA N6-adenosine threonylcarbamoyltransferase from Cereibacter sphaeroides (strain KD131 / KCTC 12085) (Rhodobacter sphaeroides).